Reading from the N-terminus, the 410-residue chain is Lissencephaly-1 homolog B (410 aa).

The region spanning 7-39 (QRDELNRAIADYLRSNGYEEAYSTFKKEAELDM) is the LisH domain. Positions 56-82 (TSVIRLQKKVMELESKLNEAKEEITLG) form a coiled coil. WD repeat units lie at residues 106–147 (GHRS…RTLK), 148–187 (GHTD…CIRT), 190–229 (GHDH…CVKT), 232–271 (GHRE…CKAE), 274–333 (EHEH…CLMT), 336–375 (GHDN…CMKT), and 378–410 (AHEH…WECR).

It belongs to the WD repeat LIS1/nudF family. In terms of assembly, can self-associate. Component of the cytosolic PAF-AH (I) heterotetrameric enzyme, which is composed of PAFAH1B1 (beta), PAFAH1B2 (alpha2) and PAFAH1B3 (alpha1) subunits. The catalytic activity of the enzyme resides in the alpha1 (PAFAH1B3) and alpha2 (PAFAH1B2) subunits, whereas the beta subunit (PAFAH1B1) has regulatory activity. Trimer formation is not essential for the catalytic activity. Interacts with dynein, dynactin, nde1 and ndel1.

It is found in the cytoplasm. Its subcellular location is the cytoskeleton. The protein localises to the microtubule organizing center. The protein resides in the centrosome. In terms of biological role, regulatory subunit (beta subunit) of the cytosolic type I platelet-activating factor (PAF) acetylhydrolase (PAF-AH (I)), an enzyme that catalyzes the hydrolyze of the acetyl group at the sn-2 position of PAF and its analogs and participates in PAF inactivation. Regulates the PAF-AH (I) activity in a catalytic dimer composition-dependent manner. Positively regulates the activity of the minus-end directed microtubule motor protein dynein. May enhance dynein-mediated microtubule sliding by targeting dynein to the microtubule plus end. Required for several dynein- and microtubule-dependent processes such as the maintenance of Golgi integrity, the peripheral transport of microtubule fragments and the coupling of the nucleus and centrosome. May be required for proliferation of neuronal precursors and neuronal migration. The polypeptide is Lissencephaly-1 homolog B (pafah1b1-2) (Salmo salar (Atlantic salmon)).